Here is a 549-residue protein sequence, read N- to C-terminus: Cytochrome c oxidase subunit 1 (549 aa).

The helical transmembrane segment at 18–38 threads the bilayer; sequence LCYLLVAILSGFVGYVYSLFI. Residues Glu-41 and Gly-46 each contribute to the Ca(2+) site. A helical transmembrane segment spans residues 42 to 62; it reads LSLIGCGILFGDYQFYNVLIT. Residue His-64 participates in Fe(II)-heme a binding. 5 consecutive transmembrane segments (helical) span residues 66–86, 100–120, 148–168, 186–206, and 222–242; these read LIMV…NYFI, LNNM…NGFL, FVMF…INLL, LFIW…PVLA, and FYDV…WFFG. His-243 lines the Cu cation pocket. Residues 243–247 constitute a cross-link (1'-histidyl-3'-tyrosine (His-Tyr)); the sequence is HPEVY. 2 helical membrane passes run 246–266 and 269–289; these read VYII…VIGF and VFST…GMFV. Tyr-247 is an O2 binding site. His-292 and His-293 together coordinate Cu cation. A run of 2 helical transmembrane segments spans residues 306–326 and 340–360; these read YFGG…FNWI and VYFV…GLFL. Mg(2+)-binding residues include His-370 and Asp-371. Heme a3 is bound at residue His-378. 5 helical membrane passes run 379–399, 402–422, 460–480, 484–504, and 520–540; these read FHYV…IHFL, WLPI…LFIG, MLLL…FLFW, LFFV…STWL, and IVLD…IFFW. His-380 contributes to the Fe(II)-heme a binding site.

The protein belongs to the heme-copper respiratory oxidase family. In terms of assembly, component of the cytochrome c oxidase (complex IV, CIV), a multisubunit enzyme composed of a catalytic core of 3 subunits and several supernumerary subunits. The complex exists as a monomer or a dimer and forms supercomplexes (SCs) in the inner mitochondrial membrane with ubiquinol-cytochrome c oxidoreductase (cytochrome b-c1 complex, complex III, CIII). Heme serves as cofactor. Requires Cu cation as cofactor.

Its subcellular location is the mitochondrion inner membrane. The catalysed reaction is 4 Fe(II)-[cytochrome c] + O2 + 8 H(+)(in) = 4 Fe(III)-[cytochrome c] + 2 H2O + 4 H(+)(out). It functions in the pathway energy metabolism; oxidative phosphorylation. Functionally, component of the cytochrome c oxidase, the last enzyme in the mitochondrial electron transport chain which drives oxidative phosphorylation. The respiratory chain contains 3 multisubunit complexes succinate dehydrogenase (complex II, CII), ubiquinol-cytochrome c oxidoreductase (cytochrome b-c1 complex, complex III, CIII) and cytochrome c oxidase (complex IV, CIV), that cooperate to transfer electrons derived from NADH and succinate to molecular oxygen, creating an electrochemical gradient over the inner membrane that drives transmembrane transport and the ATP synthase. Cytochrome c oxidase is the component of the respiratory chain that catalyzes the reduction of oxygen to water. Electrons originating from reduced cytochrome c in the intermembrane space (IMS) are transferred via the dinuclear copper A center (CU(A)) of subunit 2 and heme A of subunit 1 to the active site in subunit 1, a binuclear center (BNC) formed by heme A3 and copper B (CU(B)). The BNC reduces molecular oxygen to 2 water molecules using 4 electrons from cytochrome c in the IMS and 4 protons from the mitochondrial matrix. The polypeptide is Cytochrome c oxidase subunit 1 (COI) (Leishmania tarentolae (Sauroleishmania tarentolae)).